Reading from the N-terminus, the 154-residue chain is RxLR effector protein PITG_12737 (154 aa).

The first 16 residues, 1–16 (MRVYFILILAVATVSG), serve as a signal peptide directing secretion. The RxLR-dEER motif lies at 42-58 (RLLRAELTTDETYPEER).

It belongs to the RxLR effector family.

The protein resides in the secreted. The protein localises to the host nucleus. It localises to the host cytoplasm. Its function is as follows. Effector that enhances P.infestans colonization of Nicotiana benthamiana leaves. This is RxLR effector protein PITG_12737 from Phytophthora infestans (strain T30-4) (Potato late blight agent).